The primary structure comprises 833 residues: Translation initiation factor IF-2 (833 aa).

A disordered region spans residues 1–247 (MTEDVKKADG…ALQQAFTKPA (247 aa)). 2 stretches are compositionally biased toward basic and acidic residues: residues 53–99 (QKAE…EAKK) and 110–152 (VDVE…RYAE). The segment covering 153 to 166 (LSEEDAENENSEDY) has biased composition (acidic residues). Residues 187 to 203 (KENRNRGGKNKVAKAKK) are compositionally biased toward basic residues. Basic and acidic residues predominate over residues 204–227 (GGREDESSKTERESNRRNQKDGKM). Residues 333-502 (TRAPVVTIMG…LLQSEVLELT (170 aa)) enclose the tr-type G domain. The interval 342–349 (GHVDHGKT) is G1. 342 to 349 (GHVDHGKT) serves as a coordination point for GTP. Residues 367–371 (GITQH) form a G2 region. Residues 388-391 (DTPG) are G3. GTP is bound by residues 388–392 (DTPGH) and 442–445 (NKID). The segment at 442-445 (NKID) is G4. The tract at residues 478-480 (SAK) is G5.

It belongs to the TRAFAC class translation factor GTPase superfamily. Classic translation factor GTPase family. IF-2 subfamily.

It is found in the cytoplasm. Functionally, one of the essential components for the initiation of protein synthesis. Protects formylmethionyl-tRNA from spontaneous hydrolysis and promotes its binding to the 30S ribosomal subunits. Also involved in the hydrolysis of GTP during the formation of the 70S ribosomal complex. The protein is Translation initiation factor IF-2 (infB) of Pasteurella multocida (strain Pm70).